The chain runs to 536 residues: Heparanase (536 aa).

The N-terminal stretch at 1-28 is a signal peptide; the sequence is MLRPLLLLWLWGRLGALTQGTPAGTAPT. Heparan sulfate group contacts are provided by residues 55-57 and threonine 90; that span reads DAS. Positions 103–150 are cleaved as a propeptide — linker peptide; sequence PTSEERSYWQSQDNNDICGSERVSADVLRKLQMEWPFQELLLLREQYQ. Cysteine 120 and cysteine 172 are oxidised to a cystine. Residue 151–155 participates in heparan sulfate group binding; the sequence is REFKN. Asparagine 155, asparagine 193, and asparagine 210 each carry an N-linked (GlcNAc...) asparagine glycan. Glutamate 218 acts as the Proton donor in catalysis. Heparan sulfate group is bound by residues 263-273, histidine 289, and arginine 296; that span reads QPRGKTVKLLR. A required for heterodimerization with the heparanase 8 kDa subunit region spans residues 281 to 410; the sequence is EVIDSLTWHH…LLFKKLVGPK (130 aa). Glutamate 336 (nucleophile) is an active-site residue. Residues 341 to 343 and 382 to 384 each bind heparan sulfate group; these read YGG and GNY. An intrachain disulfide couples cysteine 430 to cysteine 535. N-linked (GlcNAc...) asparagine glycosylation occurs at asparagine 452. The tract at residues 520–536 is required for transferring proheparanase to the Golgi apparatus, secretion and subsequent enzyme activity and for enhancement of PKB/AKT1 phosphorylation; that stretch reads FSYGFFVIRNAKIAACI.

It belongs to the glycosyl hydrolase 79 family. In terms of assembly, heterodimer; heterodimer formation between the 8 kDa and the 50 kDa subunits is required for enzyme activity. Interacts with TF; the interaction, inhibited by heparin, enhances the generation of activated factor X and activates coagulation. Interacts with HRG; the interaction is enhanced at acidic pH, partially inhibits binding of HPSE to cell surface receptors and modulates its enzymatic activity. Interacts with SDC1; the interaction enhances the shedding of SDC1. Interacts with HPSE2. In terms of processing, proteolytically processed. The cleavage of the 65 kDa form leads to the generation of a linker peptide, and the 8 kDa and 50 kDa products. The active form, the 8/50 kDa heterodimer, is resistant to degradation. Complete removal of the linker peptide appears to be a prerequisite to the complete activation of the enzyme. Post-translationally, N-glycosylated. Glycosylation of the 50 kDa subunit appears to be essential for its solubility.

Its subcellular location is the lysosome membrane. It localises to the secreted. It is found in the nucleus. The enzyme catalyses endohydrolysis of (1-&gt;4)-beta-D-glycosidic bonds of heparan sulfate chains in heparan sulfate proteoglycan.. Inhibited by laminarin sulfate and, to a lower extent, by heparin and sulfamin. Activated by calcium and magnesium. Inhibited by EDTA. Endoglycosidase that cleaves heparan sulfate proteoglycans (HSPGs) into heparan sulfate side chains and core proteoglycans. Participates in extracellular matrix (ECM) degradation and remodeling. Selectively cleaves the linkage between a glucuronic acid unit and an N-sulfo glucosamine unit carrying either a 3-O-sulfo or a 6-O-sulfo group. Can also cleave the linkage between a glucuronic acid unit and an N-sulfo glucosamine unit carrying a 2-O-sulfo group, but not linkages between a glucuronic acid unit and a 2-O-sulfated iduronic acid moiety. It is essentially inactive at neutral pH but becomes active under acidic conditions such as during tumor invasion and in inflammatory processes. Facilitates cell migration associated with metastasis, wound healing and inflammation. Enhances shedding of syndecans, and increases endothelial invasion and angiogenesis in myelomas. Acts as a procoagulant by increasing the generation of activation factor X in the presence of tissue factor and activation factor VII. Increases cell adhesion to the extracellular matrix (ECM), independent of its enzymatic activity. Induces AKT1/PKB phosphorylation via lipid rafts increasing cell mobility and invasion. Heparin increases this AKT1/PKB activation. Regulates osteogenesis. Enhances angiogenesis through up-regulation of SRC-mediated activation of VEGF. Implicated in hair follicle inner root sheath differentiation and hair homeostasis. This is Heparanase (Hpse) from Rattus norvegicus (Rat).